The following is a 90-amino-acid chain: NELL2-interacting cell ontogeny regulator 1 (90 aa).

The signal sequence occupies residues 1–28 (MAPALRSLLSPRTLLLLLLSLALLGARA).

It belongs to the NICOL family. Interacts with NELL2; triggers epididymal differentiation. Interacts with cell surface receptor TFRC; the interaction mediates uptake of NICOL1 into fibroblasts. In terms of tissue distribution, expression is enriched in both male and female reproductive organs, including the testis, epididymis, seminal vesicles, coagulating glands, ovary and uterus, and in various non-reproductive organs such as brain, thymus and liver. In testis, expressed in both germ cells and Sertoli cells. Also expressed at low levels in the kidney. Expressed during neocortex and cerebellum development.

It localises to the secreted. It is found in the cytoplasm. The protein localises to the perinuclear region. Its function is as follows. mRNA-binding protein which interacts with a range of target mRNAs including SERPINE1, ACTA2, CCN2 and COL4A1 and may promote extracellular matrix production. Binds to the 3'-UTR of SERPINE1 mRNA and stabilizes the mRNA, possibly by competing for binding with SERBP1 and preventing SERBP1-mediated mRNA degradation. Also binds to the 3'-UTR of ACTA2. Testis-derived lumicrine factor that triggers epididymal differentiation and sperm maturation. This Mus musculus (Mouse) protein is NELL2-interacting cell ontogeny regulator 1.